A 2038-amino-acid polypeptide reads, in one-letter code: Fer-1-like protein 5 (2038 aa).

7 consecutive C2 domains span residues 1–100 (MLRV…MFVR), 145–265 (TQKK…TLLR), 307–424 (QNTR…QGMY), 1055–1186 (TPED…FTPL), 1225–1345 (IPCK…SLNY), 1467–1587 (PKPP…ARCG), and 1705–1853 (GPPG…KQCS). Ca(2+)-binding residues include D1502, D1508, D1557, F1558, D1559, D1565, D1824, S1827, and D1830. Residues 1961–1981 (IICLVVTLVIGFILLNFVYSA) traverse the membrane as a helical segment.

This sequence belongs to the ferlin family. Interacts (via second C2 domain) with EHD1 and EHD2. Ca(2+) is required as a cofactor. Expressed in differentiating myoblasts and myotubes.

Its subcellular location is the cell membrane. It localises to the membrane. Its function is as follows. Plays a role in myoblast fusion; probable mediator of endocytic recycling for membrane trafficking events during myotube formation. The protein is Fer-1-like protein 5 (Fer1l5) of Mus musculus (Mouse).